Reading from the N-terminus, the 437-residue chain is Amino-acid acetyltransferase (437 aa).

One can recognise an N-acetyltransferase domain in the interval 289-429 (ENIRLATSFD…EHYNYQRMSK (141 aa)).

It belongs to the acetyltransferase family. ArgA subfamily.

Its subcellular location is the cytoplasm. It catalyses the reaction L-glutamate + acetyl-CoA = N-acetyl-L-glutamate + CoA + H(+). Its pathway is amino-acid biosynthesis; L-arginine biosynthesis; N(2)-acetyl-L-ornithine from L-glutamate: step 1/4. The sequence is that of Amino-acid acetyltransferase from Actinobacillus pleuropneumoniae serotype 3 (strain JL03).